The chain runs to 429 residues: 3-phosphoshikimate 1-carboxyvinyltransferase (429 aa).

Positions 11, 12, and 16 each coordinate 3-phosphoshikimate. A phosphoenolpyruvate-binding site is contributed by Lys11. Residues Gly82 and Arg110 each coordinate phosphoenolpyruvate. The 3-phosphoshikimate site is built by Ser155, Gln157, Asp302, and Lys329. Gln157 is a binding site for phosphoenolpyruvate. Asp302 (proton acceptor) is an active-site residue. Residues Arg333 and Arg385 each coordinate phosphoenolpyruvate.

The protein belongs to the EPSP synthase family. Monomer.

It localises to the cytoplasm. It carries out the reaction 3-phosphoshikimate + phosphoenolpyruvate = 5-O-(1-carboxyvinyl)-3-phosphoshikimate + phosphate. Its pathway is metabolic intermediate biosynthesis; chorismate biosynthesis; chorismate from D-erythrose 4-phosphate and phosphoenolpyruvate: step 6/7. Functionally, catalyzes the transfer of the enolpyruvyl moiety of phosphoenolpyruvate (PEP) to the 5-hydroxyl of shikimate-3-phosphate (S3P) to produce enolpyruvyl shikimate-3-phosphate and inorganic phosphate. This Helicobacter pylori (strain Shi470) protein is 3-phosphoshikimate 1-carboxyvinyltransferase.